A 362-amino-acid polypeptide reads, in one-letter code: Small ribosomal subunit protein uS4m (362 aa).

Positions 105–179 constitute an S4 RNA-binding domain; sequence TRFDVILLRL…FYKEILVEKI (75 aa).

The protein belongs to the universal ribosomal protein uS4 family. In terms of assembly, component of the mitochondrial ribosome small subunit.

The protein resides in the mitochondrion. In Arabidopsis thaliana (Mouse-ear cress), this protein is Small ribosomal subunit protein uS4m (RPS4).